Reading from the N-terminus, the 135-residue chain is NADPH-dependent 7-cyano-7-deazaguanine reductase (135 aa).

Cys48 acts as the Thioimide intermediate in catalysis. Residue Asp55 is the Proton donor of the active site. Substrate contacts are provided by residues 70-72 (LEL) and 89-90 (HE).

The protein belongs to the GTP cyclohydrolase I family. QueF type 1 subfamily.

The protein localises to the cytoplasm. It catalyses the reaction 7-aminomethyl-7-carbaguanine + 2 NADP(+) = 7-cyano-7-deazaguanine + 2 NADPH + 3 H(+). The protein operates within tRNA modification; tRNA-queuosine biosynthesis. Its function is as follows. Catalyzes the NADPH-dependent reduction of 7-cyano-7-deazaguanine (preQ0) to 7-aminomethyl-7-deazaguanine (preQ1). In Prochlorococcus marinus (strain SARG / CCMP1375 / SS120), this protein is NADPH-dependent 7-cyano-7-deazaguanine reductase.